Here is a 635-residue protein sequence, read N- to C-terminus: 1-deoxy-D-xylulose-5-phosphate synthase (635 aa).

Residues H74 and 115–117 (AHS) each bind thiamine diphosphate. D146 provides a ligand contact to Mg(2+). Residues 147 to 148 (GA), N176, Y283, and E365 contribute to the thiamine diphosphate site. N176 serves as a coordination point for Mg(2+).

This sequence belongs to the transketolase family. DXPS subfamily. As to quaternary structure, homodimer. The cofactor is Mg(2+). Thiamine diphosphate is required as a cofactor.

The enzyme catalyses D-glyceraldehyde 3-phosphate + pyruvate + H(+) = 1-deoxy-D-xylulose 5-phosphate + CO2. It participates in metabolic intermediate biosynthesis; 1-deoxy-D-xylulose 5-phosphate biosynthesis; 1-deoxy-D-xylulose 5-phosphate from D-glyceraldehyde 3-phosphate and pyruvate: step 1/1. Its function is as follows. Catalyzes the acyloin condensation reaction between C atoms 2 and 3 of pyruvate and glyceraldehyde 3-phosphate to yield 1-deoxy-D-xylulose-5-phosphate (DXP). The sequence is that of 1-deoxy-D-xylulose-5-phosphate synthase from Paraburkholderia xenovorans (strain LB400).